The primary structure comprises 108 residues: DNA-directed RNA polymerase III subunit RPC10 (108 aa).

6 residues coordinate Zn(2+): C5, C8, C25, C28, C69, and C72. Residues 5–28 (CPGCGNGLIVEEGQRCHRFACNTC) form a C4-type zinc finger. Residues 65 to 107 (TAEPCPKCEHPRAYFMQLQTRSADEPMTTFYKCCNAQCGHRWR) form a TFIIS-type zinc finger. Positions 88 to 89 (DE) match the Hairpin motif. The Zn(2+) site is built by C98 and C102.

The protein belongs to the archaeal RpoM/eukaryotic RPA12/RPB9/RPC11 RNA polymerase family. As to quaternary structure, component of the RNA polymerase III complex consisting of 17 subunits: a ten-subunit horseshoe-shaped catalytic core composed of POLR3A/RPC1, POLR3B/RPC2, POLR1C/RPAC1, POLR1D/RPAC2, POLR3K/RPC10, POLR2E/RPABC1, POLR2F/RPABC2, POLR2H/RPABC3, POLR2K/RPABC4 and POLR2L/RPABC5; a mobile stalk composed of two subunits POLR3H/RPC8 and CRCP/RPC9, protruding from the core and functioning primarily in transcription initiation; and additional subunits homologous to general transcription factors of the RNA polymerase II machinery, POLR3C/RPC3-POLR3F/RPC6-POLR3G/RPC7 heterotrimer required for transcription initiation and POLR3D/RPC4-POLR3E/RPC5 heterodimer involved in both transcription initiation and termination.

The protein resides in the nucleus. Functionally, core component of RNA polymerase III (Pol III) which synthesizes small non-coding RNAs using the four ribonucleoside triphosphates as substrates. Can mediate Pol I proofreading of the nascent RNA transcript. Anchors into the Pol III active site to constantly monitor transcription fidelity, cleaves mis-incorporated 5'-ribonucleotides and restarts the transcription process. Once Pol III reaches the poly(dT) termination signal, can induce Pol III clamp opening and transcription termination. Pol III plays an important role in sensing and limiting infection by intracellular bacteria and DNA viruses. Acts as a nuclear and cytosolic DNA sensor involved in innate immune response. Can sense non-self dsDNA that serves as template for transcription into dsRNA. The non-self RNA polymerase III transcripts, such as Epstein-Barr virus-encoded RNAs (EBERs) induce type I interferon and NF-kappa-B through the RIG-I pathway. The polypeptide is DNA-directed RNA polymerase III subunit RPC10 (Mus musculus (Mouse)).